Consider the following 202-residue polypeptide: MTRPLVGVLALQGDVREHLAALNDSGADAVGIRRPEELEKIDGLVIPGGESTTMSKLLQIFELLEPLKARLRDGLPAYGSCAGMILLASEILDTRPDAQHLGAIDMTVRRNAFGRQVDSFESDLEFEGIVGDPMRAVFIRAPWVERVGDDVQILARVPESGGAAAGRIVAVRQGSVVATSFHPEVTGDRRVHELFVDIVRGV.

49–51 (GES) contributes to the L-glutamine binding site. Cysteine 81 acts as the Nucleophile in catalysis. Residues arginine 110 and 139 to 140 (IR) each bind L-glutamine. Active-site charge relay system residues include histidine 182 and glutamate 184.

Belongs to the glutaminase PdxT/SNO family. As to quaternary structure, in the presence of PdxS, forms a dodecamer of heterodimers. Only shows activity in the heterodimer.

It catalyses the reaction aldehydo-D-ribose 5-phosphate + D-glyceraldehyde 3-phosphate + L-glutamine = pyridoxal 5'-phosphate + L-glutamate + phosphate + 3 H2O + H(+). The catalysed reaction is L-glutamine + H2O = L-glutamate + NH4(+). It participates in cofactor biosynthesis; pyridoxal 5'-phosphate biosynthesis. In terms of biological role, catalyzes the hydrolysis of glutamine to glutamate and ammonia as part of the biosynthesis of pyridoxal 5'-phosphate. The resulting ammonia molecule is channeled to the active site of PdxS. The polypeptide is Pyridoxal 5'-phosphate synthase subunit PdxT (Rhodococcus opacus (strain B4)).